A 540-amino-acid chain; its full sequence is Chaperonin GroEL (540 aa).

Residues 30 to 33 (TLGP), lysine 51, 87 to 91 (DGTTT), glycine 415, and aspartate 495 contribute to the ATP site.

It belongs to the chaperonin (HSP60) family. In terms of assembly, forms a cylinder of 14 subunits composed of two heptameric rings stacked back-to-back. Interacts with the co-chaperonin GroES.

The protein localises to the cytoplasm. The enzyme catalyses ATP + H2O + a folded polypeptide = ADP + phosphate + an unfolded polypeptide.. Together with its co-chaperonin GroES, plays an essential role in assisting protein folding. The GroEL-GroES system forms a nano-cage that allows encapsulation of the non-native substrate proteins and provides a physical environment optimized to promote and accelerate protein folding. The sequence is that of Chaperonin GroEL from Erwinia aphidicola.